Reading from the N-terminus, the 509-residue chain is Anaerobic nitric oxide reductase transcription regulator NorR (509 aa).

Asp-56 carries the post-translational modification 4-aspartylphosphate. The Sigma-54 factor interaction domain maps to 186 to 415 (MIGRSPAMDR…LEHAIHRAAV (230 aa)). ATP is bound by residues 214 to 221 (GETGVGKE) and 277 to 286 (ADKGTLFLDE). Positions 484–503 (WAATARALEMDGGNLHRLAR) form a DNA-binding region, H-T-H motif.

The protein operates within nitrogen metabolism; nitric oxide reduction. Functionally, required for the expression of anaerobic nitric oxide (NO) reductase, acts as a transcriptional activator for at least the norVW operon. Activation also requires sigma-54. In Aeromonas salmonicida (strain A449), this protein is Anaerobic nitric oxide reductase transcription regulator NorR.